The sequence spans 125 residues: Transposase for transposon Tn554 (125 aa).

One of three proteins encoded by transposon Tn554 required for its transposition. This Staphylococcus aureus (strain Mu50 / ATCC 700699) protein is Transposase for transposon Tn554 (tnpC1).